We begin with the raw amino-acid sequence, 199 residues long: Probable nicotinate-nucleotide adenylyltransferase (199 aa).

The protein belongs to the NadD family.

The catalysed reaction is nicotinate beta-D-ribonucleotide + ATP + H(+) = deamido-NAD(+) + diphosphate. Its pathway is cofactor biosynthesis; NAD(+) biosynthesis; deamido-NAD(+) from nicotinate D-ribonucleotide: step 1/1. In terms of biological role, catalyzes the reversible adenylation of nicotinate mononucleotide (NaMN) to nicotinic acid adenine dinucleotide (NaAD). The sequence is that of Probable nicotinate-nucleotide adenylyltransferase from Roseobacter denitrificans (strain ATCC 33942 / OCh 114) (Erythrobacter sp. (strain OCh 114)).